Reading from the N-terminus, the 418-residue chain is Ciliary microtubule-associated protein 2 (418 aa).

As to expression, sperm.

The sequence is that of Ciliary microtubule-associated protein 2 from Homo sapiens (Human).